The following is a 466-amino-acid chain: Putative proline/betaine transporter (466 aa).

Transmembrane regions (helical) follow at residues 20–42 (VVAT…YTTA), 63–83 (FAAL…FGII), 91–111 (VVLT…GLLP), 116–136 (IGLW…FSTG), 164–184 (IGTL…TFFL), 191–211 (SFGW…GLYL), 239–259 (IIRF…FFNV), 285–305 (VLIT…GKLA), 313–332 (VFLI…FMLL), 337–354 (FVVI…LSTY), 377–397 (VTFN…ATWL), and 405–425 (LAPA…ITFL).

The protein belongs to the major facilitator superfamily. Metabolite:H+ Symporter (MHS) family (TC 2.A.1.6) family.

The protein resides in the cell membrane. May be a proton symporter involved in the uptake of osmolytes such as proline and glycine betaine. The polypeptide is Putative proline/betaine transporter (proP) (Staphylococcus aureus (strain MSSA476)).